The chain runs to 271 residues: MLLSSPTTPSRGRTPSAVERLEADKAKYVKTHQVIVRRQEPALRGGPGPLTPHPCNELGASASPRTPGPARRGSGRRQPRPDSLIFYRQKRDCKASVNKENAKGQGLVRRLFLGATRDAAPSSPAPTERPGAPAGWAGSPDTPEATGKRAVCPTCSLPLSEKERFFNYCGLERALVEVLGAERFSPQSWGAEHGPQVATSPPPGSGDTSDWTSSDRDAGSPDCAGGGGGSEAAGSARDGRPTVSVVERNARVIQWLYGCQRARAPPRESEV.

Residues 1 to 13 (MLLSSPTTPSRGR) are compositionally biased toward polar residues. 3 disordered regions span residues 1-84 (MLLS…PDSL), 118-149 (DAAP…TGKR), and 186-242 (PQSW…GRPT).

The protein belongs to the FAM110 family.

This is Protein FAM110D from Mus musculus (Mouse).